The sequence spans 200 residues: MTIRYPNGKRYNQASQPQKTPIKTHTYSNRGMSLEEELNETNQYYLTHNIACVHKKPTPLQIVKVDYPARSAAVVKEAYFKQPSTTDYNGVYKGKYIDFEAKETKNKTSFPLQNFHLHQIEHMKQVVAHNGIAFVIIKFTLFDEFYLLDAKHIIAFWNRQNTGGRKSITKEEIEEHGSLLSCGYHPRIDYIRVLDTVYFS.

The interval 1-25 is disordered; it reads MTIRYPNGKRYNQASQPQKTPIKTH. Over residues 10-25 the composition is skewed to polar residues; that stretch reads RYNQASQPQKTPIKTH. Mg(2+) is bound by residues T85, D87, E100, and Q119.

It belongs to the RecU family. The cofactor is Mg(2+).

It localises to the cytoplasm. It carries out the reaction Endonucleolytic cleavage at a junction such as a reciprocal single-stranded crossover between two homologous DNA duplexes (Holliday junction).. Its function is as follows. Endonuclease that resolves Holliday junction intermediates in genetic recombination. Cleaves mobile four-strand junctions by introducing symmetrical nicks in paired strands. Promotes annealing of linear ssDNA with homologous dsDNA. Required for DNA repair, homologous recombination and chromosome segregation. The protein is Holliday junction resolvase RecU of Bacillus cereus (strain G9842).